Consider the following 599-residue polypeptide: Sulfite reductase [NADPH] flavoprotein alpha-component (599 aa).

Residues 64-202 (ITIISASQTG…AASEWRARVV (139 aa)) form the Flavodoxin-like domain. FMN is bound by residues 70 to 75 (SQTGNA), 117 to 120 (STQG), and 153 to 162 (LGDSSYEFFC). The FAD-binding FR-type domain maps to 234–448 (DAPLVASLSV…IEHNDNFRLP (215 aa)). Residues threonine 322, alanine 356, 386–389 (RLYS), 404–406 (TVG), tyrosine 410, and 419–422 (GGAS) each bind FAD. Residues 519–520 (SR), 525–529 (KVYVQ), and aspartate 561 contribute to the NADP(+) site. Tyrosine 599 lines the FAD pocket.

Belongs to the NADPH-dependent sulphite reductase flavoprotein subunit CysJ family. It in the N-terminal section; belongs to the flavodoxin family. The protein in the C-terminal section; belongs to the flavoprotein pyridine nucleotide cytochrome reductase family. In terms of assembly, alpha(8)-beta(8). The alpha component is a flavoprotein, the beta component is a hemoprotein. FAD serves as cofactor. The cofactor is FMN.

It catalyses the reaction hydrogen sulfide + 3 NADP(+) + 3 H2O = sulfite + 3 NADPH + 4 H(+). Its pathway is sulfur metabolism; hydrogen sulfide biosynthesis; hydrogen sulfide from sulfite (NADPH route): step 1/1. Functionally, component of the sulfite reductase complex that catalyzes the 6-electron reduction of sulfite to sulfide. This is one of several activities required for the biosynthesis of L-cysteine from sulfate. The flavoprotein component catalyzes the electron flow from NADPH -&gt; FAD -&gt; FMN to the hemoprotein component. This is Sulfite reductase [NADPH] flavoprotein alpha-component from Shigella flexneri serotype 5b (strain 8401).